The primary structure comprises 364 residues: tRNA 2-selenouridine synthase (364 aa).

Positions 14-137 (LIADTPIIDV…LRQTTIQATI (124 aa)) constitute a Rhodanese domain. Cysteine 97 (S-selanylcysteine intermediate) is an active-site residue.

It belongs to the SelU family. In terms of assembly, monomer.

It carries out the reaction 5-methylaminomethyl-2-thiouridine(34) in tRNA + selenophosphate + (2E)-geranyl diphosphate + H2O + H(+) = 5-methylaminomethyl-2-selenouridine(34) in tRNA + (2E)-thiogeraniol + phosphate + diphosphate. It catalyses the reaction 5-methylaminomethyl-2-thiouridine(34) in tRNA + (2E)-geranyl diphosphate = 5-methylaminomethyl-S-(2E)-geranyl-thiouridine(34) in tRNA + diphosphate. The catalysed reaction is 5-methylaminomethyl-S-(2E)-geranyl-thiouridine(34) in tRNA + selenophosphate + H(+) = 5-methylaminomethyl-2-(Se-phospho)selenouridine(34) in tRNA + (2E)-thiogeraniol. The enzyme catalyses 5-methylaminomethyl-2-(Se-phospho)selenouridine(34) in tRNA + H2O = 5-methylaminomethyl-2-selenouridine(34) in tRNA + phosphate. Involved in the post-transcriptional modification of the uridine at the wobble position (U34) of tRNA(Lys), tRNA(Glu) and tRNA(Gln). Catalyzes the conversion of 2-thiouridine (S2U-RNA) to 2-selenouridine (Se2U-RNA). Acts in a two-step process involving geranylation of 2-thiouridine (S2U) to S-geranyl-2-thiouridine (geS2U) and subsequent selenation of the latter derivative to 2-selenouridine (Se2U) in the tRNA chain. The polypeptide is tRNA 2-selenouridine synthase (Escherichia coli O8 (strain IAI1)).